The following is a 135-amino-acid chain: Evasin P1134 (135 aa).

Positions 1–31 (MEVKTFAFLQIAVFIALGIQIFAAVTAAADA) are cleaved as a signal peptide. 3 disulfide bridges follow: cysteine 41/cysteine 63, cysteine 45/cysteine 65, and cysteine 56/cysteine 76. Asparagine 44 carries N-linked (GlcNAc...) asparagine glycosylation. A disordered region spans residues 88–112 (ETPSNSDLEAATPRPRKTLYPVRNP).

The protein resides in the secreted. Salivary chemokine-binding protein which binds to host chemokine CXCL1. The sequence is that of Evasin P1134 from Ixodes ricinus (Common tick).